The chain runs to 372 residues: DNA replication and repair protein RecF (372 aa).

30–37 (GENAQGKT) serves as a coordination point for ATP.

The protein belongs to the RecF family.

The protein localises to the cytoplasm. The RecF protein is involved in DNA metabolism; it is required for DNA replication and normal SOS inducibility. RecF binds preferentially to single-stranded, linear DNA. It also seems to bind ATP. The sequence is that of DNA replication and repair protein RecF from Geobacillus thermodenitrificans (strain NG80-2).